A 209-amino-acid polypeptide reads, in one-letter code: Ribosomal RNA large subunit methyltransferase E (209 aa).

G63, W65, D83, D99, and D124 together coordinate S-adenosyl-L-methionine. The Proton acceptor role is filled by K164.

This sequence belongs to the class I-like SAM-binding methyltransferase superfamily. RNA methyltransferase RlmE family.

The protein resides in the cytoplasm. The enzyme catalyses uridine(2552) in 23S rRNA + S-adenosyl-L-methionine = 2'-O-methyluridine(2552) in 23S rRNA + S-adenosyl-L-homocysteine + H(+). Functionally, specifically methylates the uridine in position 2552 of 23S rRNA at the 2'-O position of the ribose in the fully assembled 50S ribosomal subunit. The polypeptide is Ribosomal RNA large subunit methyltransferase E (Pseudoalteromonas atlantica (strain T6c / ATCC BAA-1087)).